Here is a 140-residue protein sequence, read N- to C-terminus: FAD synthase (140 aa).

Residues 9–10, 14–17, and Asp92 each bind ATP; these read TF and HPGH.

It belongs to the archaeal FAD synthase family. Homodimer. It depends on a divalent metal cation as a cofactor.

The enzyme catalyses FMN + ATP + H(+) = FAD + diphosphate. Its pathway is cofactor biosynthesis; FAD biosynthesis; FAD from FMN: step 1/1. Functionally, catalyzes the transfer of the AMP portion of ATP to flavin mononucleotide (FMN) to produce flavin adenine dinucleotide (FAD) coenzyme. The protein is FAD synthase of Natronomonas pharaonis (strain ATCC 35678 / DSM 2160 / CIP 103997 / JCM 8858 / NBRC 14720 / NCIMB 2260 / Gabara) (Halobacterium pharaonis).